A 446-amino-acid polypeptide reads, in one-letter code: Na(+)-translocating NADH-quinone reductase subunit A (446 aa).

The protein belongs to the NqrA family. Composed of six subunits; NqrA, NqrB, NqrC, NqrD, NqrE and NqrF.

The catalysed reaction is a ubiquinone + n Na(+)(in) + NADH + H(+) = a ubiquinol + n Na(+)(out) + NAD(+). Its function is as follows. NQR complex catalyzes the reduction of ubiquinone-1 to ubiquinol by two successive reactions, coupled with the transport of Na(+) ions from the cytoplasm to the periplasm. NqrA to NqrE are probably involved in the second step, the conversion of ubisemiquinone to ubiquinol. This Vibrio anguillarum (Listonella anguillarum) protein is Na(+)-translocating NADH-quinone reductase subunit A.